We begin with the raw amino-acid sequence, 44 residues long: U4-ctenitoxin-Co1a (44 aa).

4 disulfides stabilise this stretch: C2–C19, C9–C25, C18–C39, and C27–C37.

Expressed by the venom gland.

It localises to the secreted. In terms of biological role, omega-agatoxins are antagonists of voltage-gated calcium channels (Cav). Toxic to mice by intracerebroventricular injection. The chain is U4-ctenitoxin-Co1a from Ctenus ornatus (Brazilian spider).